The following is a 520-amino-acid chain: Transactivator/viroplasmin protein (520 aa).

Disordered stretches follow at residues 32–51 (GSSQQGELSLHRETPEKEEA) and 487–520 (QDASTDSGPKDGPPPTRSIVEKEDVPTTSSKQVD). Over residues 40 to 51 (SLHRETPEKEEA) the composition is skewed to basic and acidic residues.

Belongs to the caulimoviridae viroplasmin family.

It is found in the host cytoplasm. Enhances the ribosomal termination-reinitiation event leading to the translation of major open reading frames on the polycistronic viral RNAs. In Arabidopsis thaliana (Mouse-ear cress), this protein is Transactivator/viroplasmin protein.